Consider the following 281-residue polypeptide: BEN domain-containing protein 6 (281 aa).

2 disordered regions span residues 15–62 (VLRK…ETPL) and 143–172 (SFAS…PGEK). Residues 19-99 (RKRKRTETAN…RLRQSLVMLQ (81 aa)) are a coiled coil. The segment covering 143–160 (SFASLCSNSNSTSSSPSS) has biased composition (low complexity). Positions 162 to 172 (KAEEEQHPGEK) are enriched in basic and acidic residues. Residues 171-271 (EKQFTIERWQ…NCTKKPNASK (101 aa)) enclose the BEN domain.

Interacts (via BEN domain) with RBPJ.

The protein resides in the nucleus. Its function is as follows. Acts as a corepressor of recombining binding protein suppressor hairless (RBPJ) and inhibits Notch signaling in neural stem cells, thereby opposing their self-renewal and promoting neurogenesis. This Mus musculus (Mouse) protein is BEN domain-containing protein 6 (Bend6).